Reading from the N-terminus, the 692-residue chain is Transforming growth factor beta activator LRRC33 (692 aa).

The first 24 residues, 1-24 (MEFLPLWLCLGFHFLIVEWRSGRG), serve as a signal peptide directing secretion. The Extracellular portion of the chain corresponds to 25–650 (TATAASQGGC…CKWGQVDTGL (626 aa)). The LRRNT domain maps to 29-56 (ASQGGCKVVDRVADCRSLNLASVPSGLP). LRR repeat units lie at residues 58 to 79 (HSRMLVLDANPLRVLWNHSLQA), 82 to 103 (RLEDLSLHSCHLDRISHWAFHE), 106 to 127 (HLQNLVLADNRLSENYKESATA), 133 to 155 (RLRRLDLSGNSLTEDMAALMLQN), 158 to 179 (SLEVVSLARNTLMRLDDSVFEG), 182 to 203 (RLVELDLQRNYIFEIEGGAFDG), 206 to 227 (ELRRLNLAYNNLPCIVDFSLTQ), 228 to 239 (LRFLNVSYNILE), 251 to 272 (ELEILDLSHNQLLFFPLLPQCG), and 273 to 294 (KLHTLLLQDNSMGFYRELYNTS). The N-linked (GlcNAc...) asparagine glycan is linked to Asn74. Asn155 carries an N-linked (GlcNAc...) asparagine glycan. The N-linked (GlcNAc...) asparagine glycan is linked to Asn232. Asn292, Asn309, and Asn312 each carry an N-linked (GlcNAc...) asparagine glycan. LRR repeat units follow at residues 329–350 (ALRFLDMSQNQLRHLPDGFLKK), 353–374 (SLSHLNLNQNCLTKLHIREHEP), 377–398 (ALTELDLSRNQLAELHLAPGLT), 403–424 (NLRVFNLSSNQLLGVPTGLFHS), 427–448 (SITTLDMSHNQISLCPQTVPLD), 463–484 (SLRSLSLDGCGLKALQDCPFQG), 486–507 (SLTHLDLSSNWGILNGSVSPLS), 512–533 (TLQVLSLRNVGLGSGAAEMDFS), 537–558 (NLRELDLSGNSLTSFPKFKGSS), 559–580 (ALQTLDLRRNSLTALPQRVVSE), and 585–605 (GLQTIYLSQNPYDCCGVEGWG). A glycan (N-linked (GlcNAc...) asparagine) is linked at Asn408. A glycan (N-linked (GlcNAc...) asparagine) is linked at Asn500. Residues 606–643 (ALQHFKTIADLSMVTCNLSSKIIRVVELPEGIPQDCKW) form the LRRCT domain. Asn622 carries an N-linked (GlcNAc...) asparagine glycan. A helical transmembrane segment spans residues 651–671 (FYLVLILPSCLTLLVASTVIF). Topologically, residues 672-692 (LTFKKPLLQVIKSRCHWSSIY) are cytoplasmic.

It belongs to the LRRC32/LRRC33 family. In terms of assembly, interacts (via LRR repeats) with TLR2, TLR3, TLR4, TLR9 and probably other Toll-like receptors. Interacts with CYBB/NOX2; the interaction is direct. Interacts with TGFB1; associates via disulfide bonds with the Latency-associated peptide chain (LAP) regulatory chain of TGFB1, leading to regulate activation of TGF-beta-1.

It localises to the cell membrane. The protein resides in the endoplasmic reticulum membrane. Functionally, key regulator of transforming growth factor beta-1 (TGFB1) specifically required for microglia function in the nervous system. Required for activation of latent TGF-beta-1 in macrophages and microglia: associates specifically via disulfide bonds with the Latency-associated peptide (LAP), which is the regulatory chain of TGFB1, and regulates integrin-dependent activation of TGF-beta-1. TGF-beta-1 activation mediated by LRRC33/NRROS is highly localized: there is little spreading of TGF-beta-1 activated from one microglial cell to neighboring microglia, suggesting the existence of localized and selective activation of TGF-beta-1 by LRRC33/NRROS. Indirectly plays a role in Toll-like receptor (TLR) signaling: ability to inhibit TLR-mediated NF-kappa-B activation and cytokine production is probably a consequence of its role in TGF-beta-1 signaling. In Rattus norvegicus (Rat), this protein is Transforming growth factor beta activator LRRC33.